We begin with the raw amino-acid sequence, 366 residues long: MTPEHLPIDQYDAQLAEKTERLQSMMAPFAAPAPEVFRSPVSHYRMRAEFRLWHDGDDLYHIIFDQETRSRIRVDSFPAASELINALMPRMIAGIRDNRTLRHKLFQIDYLTTRSQQAVVSLLYHRALDDAWREEATRLRDALRADGFDVHFIGRATKTKIMLDQDYIDERLPVAGTEMIYRQVENSFTQPNAAMNIHMLEWALDVTQGSKGDLLELYCGNGNFSLALARNFNRVLATEIAKPSVAAAQYNIAANHIDNVQIIRMAAEEFTQAMNGVREFNRLQGIDLKSYQCETIFVDPPRSGLDQETVKMVQAYPHILYISCNPQTLCENLDTLSQTHRVERLALFDQFPYTHHMECGVLLTRR.

5 residues coordinate S-adenosyl-L-methionine: Gln-190, Tyr-218, Asn-223, Glu-239, and Asp-299. Catalysis depends on Cys-324, which acts as the Nucleophile. Glu-358 acts as the Proton acceptor in catalysis.

This sequence belongs to the class I-like SAM-binding methyltransferase superfamily. RNA M5U methyltransferase family. TrmA subfamily.

The catalysed reaction is uridine(54) in tRNA + S-adenosyl-L-methionine = 5-methyluridine(54) in tRNA + S-adenosyl-L-homocysteine + H(+). The enzyme catalyses uridine(341) in tmRNA + S-adenosyl-L-methionine = 5-methyluridine(341) in tmRNA + S-adenosyl-L-homocysteine + H(+). Its function is as follows. Dual-specificity methyltransferase that catalyzes the formation of 5-methyluridine at position 54 (m5U54) in all tRNAs, and that of position 341 (m5U341) in tmRNA (transfer-mRNA). The chain is tRNA/tmRNA (uracil-C(5))-methyltransferase from Cronobacter sakazakii (strain ATCC BAA-894) (Enterobacter sakazakii).